A 134-amino-acid polypeptide reads, in one-letter code: Inner membrane protein YqjE (134 aa).

Topologically, residues 1–55 (MADTHHAQGPGKSVLGIGQRIVSIMVEMVETRLRLAVVELEEEKANLFQLLLMLG) are cytoplasmic. The chain crosses the membrane as a helical span at residues 56–76 (LTMLFAAFGLMSLMVLIIWAV). Residues 77–83 (DPQYRLN) lie on the Periplasmic side of the membrane. Residues 84-104 (AMIATTVVLLLLALIGGIWTL) traverse the membrane as a helical segment. The Cytoplasmic portion of the chain corresponds to 105–134 (RKSRKSTLLRHTRHELANDRQLLEEESREQ).

Its subcellular location is the cell inner membrane. This chain is Inner membrane protein YqjE (yqjE), found in Escherichia coli O157:H7.